The sequence spans 198 residues: MEHYLSLFVKSIFIENMALSFFLGMCTFLAVSKKVSTAFGLGIAVIVVLGIAVPANQIVYENILKDGALVEGVDLTFLNFITFIGVIAALVQILEMILDKFFPALYSALGIFLPLITVNCAIFGAVSFMVQREYNFAESVVYGIGAGTGWMLAIVALAGITEKMKYSDVPAGLKGLGITFISAGLMALGFMSFSGIKL.

6 helical membrane passes run serine 11–valine 31, valine 35–alanine 55, phenylalanine 77–isoleucine 97, glycine 110–valine 130, valine 140–isoleucine 160, and leucine 176–isoleucine 196.

The protein belongs to the NqrDE/RnfAE family. Composed of six subunits; NqrA, NqrB, NqrC, NqrD, NqrE and NqrF.

The protein localises to the cell inner membrane. The catalysed reaction is a ubiquinone + n Na(+)(in) + NADH + H(+) = a ubiquinol + n Na(+)(out) + NAD(+). NQR complex catalyzes the reduction of ubiquinone-1 to ubiquinol by two successive reactions, coupled with the transport of Na(+) ions from the cytoplasm to the periplasm. NqrA to NqrE are probably involved in the second step, the conversion of ubisemiquinone to ubiquinol. In Glaesserella parasuis serovar 5 (strain SH0165) (Haemophilus parasuis), this protein is Na(+)-translocating NADH-quinone reductase subunit E.